A 738-amino-acid polypeptide reads, in one-letter code: 1,4-alpha-glucan branching enzyme GlgB (738 aa).

Asp-417 (nucleophile) is an active-site residue. The active-site Proton donor is the Glu-472.

The protein belongs to the glycosyl hydrolase 13 family. GlgB subfamily. As to quaternary structure, monomer.

It catalyses the reaction Transfers a segment of a (1-&gt;4)-alpha-D-glucan chain to a primary hydroxy group in a similar glucan chain.. It participates in glycan biosynthesis; glycogen biosynthesis. Its function is as follows. Catalyzes the formation of the alpha-1,6-glucosidic linkages in glycogen by scission of a 1,4-alpha-linked oligosaccharide from growing alpha-1,4-glucan chains and the subsequent attachment of the oligosaccharide to the alpha-1,6 position. The chain is 1,4-alpha-glucan branching enzyme GlgB from Burkholderia pseudomallei (strain 668).